The chain runs to 167 residues: UPF0225 protein VV1358 (167 aa).

The protein belongs to the UPF0225 family.

The sequence is that of UPF0225 protein VV1358 from Vibrio vulnificus (strain YJ016).